A 1281-amino-acid chain; its full sequence is Zinc finger transcription factor Trps1 (1281 aa).

The tract at residues 1–198 (MVRKKNPPLR…VPSDGGVRLN (198 aa)) is disordered. A Glycyl lysine isopeptide (Lys-Gly) (interchain with G-Cter in SUMO2) cross-link involves residue Lys-29. A compositionally biased stretch (polar residues) spans 40–49 (DQMSENTDQS). The span at 53–63 (ELNHKEEHSLH) shows a compositional bias: basic and acidic residues. Lys-76 participates in a covalent cross-link: Glycyl lysine isopeptide (Lys-Gly) (interchain with G-Cter in SUMO2). Residues Ser-90 and Ser-127 each carry the phosphoserine modification. Residues 148–162 (LETKEDQKMSPKATE) are compositionally biased toward basic and acidic residues. Polar residues predominate over residues 163–189 (ETGQAQSGQANCQGLSPVSVASKNPQV). Residues Ser-178 and Ser-216 each carry the phosphoserine modification. A C2H2-type 1; atypical zinc finger spans residues 222-247 (FKCNICGYGYYGNDPTDLIKHFRKYH). Residue Lys-263 forms a Glycyl lysine isopeptide (Lys-Gly) (interchain with G-Cter in SUMO2) linkage. The segment at 333–358 (FRCKFCNFTYMGNSSTELEQHFLQTH) adopts a C2H2-type 2; atypical zinc-finger fold. The disordered stretch occupies residues 365–394 (SLPSSEVAKPSEKNSNKSIPALQSSDSGDL). Over residues 380–391 (NKSIPALQSSDS) the composition is skewed to polar residues. Residues Lys-418, Lys-457, Lys-474, and Lys-488 each participate in a glycyl lysine isopeptide (Lys-Gly) (interchain with G-Cter in SUMO2) cross-link. The segment at 483-512 (QNDLAKSSEGETMTKTDKSSSGAKKKDFSS) is disordered. Positions 488–512 (KSSEGETMTKTDKSSSGAKKKDFSS) are enriched in basic and acidic residues. Residues 614-637 (HQCHQCSFTTPDVDVLLFHYESVH) form a C2H2-type 3; atypical zinc finger. A mediates interaction with GLI3 region spans residues 635–819 (SVHESQASDV…SLGLLTPVSG (185 aa)). Residue Lys-645 forms a Glycyl lysine isopeptide (Lys-Gly) (interchain with G-Cter in SUMO2) linkage. 2 C2H2-type zinc fingers span residues 666 to 689 (HSCTKCDFITQVEEEISRHYRRAH) and 692 to 715 (YKCRQCSFTAADTQSLLEHFNTVH). Lys-737 participates in a covalent cross-link: Glycyl lysine isopeptide (Lys-Gly) (interchain with G-Cter in SUMO2). At Thr-751 the chain carries Phosphothreonine. Residue Lys-755 forms a Glycyl lysine isopeptide (Lys-Gly) (interchain with G-Cter in SUMO2) linkage. A Glycyl lysine isopeptide (Lys-Gly) (interchain with G-Cter in SUMO1); alternate cross-link involves residue Lys-766. Lys-766 is covalently cross-linked (Glycyl lysine isopeptide (Lys-Gly) (interchain with G-Cter in SUMO2); alternate). Residues Lys-825, Lys-850, Lys-877, and Lys-879 each participate in a glycyl lysine isopeptide (Lys-Gly) (interchain with G-Cter in SUMO2) cross-link. Residues 856-887 (APAGGEKSGALPQQYPASGENKSKDESQSLLR) form a disordered region. The GATA-type zinc finger occupies 896–920 (CANCLTTKTSLWRKNANGGYVCNAC). Glycyl lysine isopeptide (Lys-Gly) (interchain with G-Cter in SUMO2) cross-links involve residues Lys-925, Lys-937, and Lys-965. Residues 961-977 (EQLNKQQRGSNEEQVNG) are compositionally biased toward polar residues. The tract at residues 961–1000 (EQLNKQQRGSNEEQVNGSPLERRSEDHLTESHQREIPLPS) is disordered. Ser-978 carries the post-translational modification Phosphoserine. Over residues 980–995 (LERRSEDHLTESHQRE) the composition is skewed to basic and acidic residues. Residues 985–1184 (EDHLTESHQR…PTANGASKEK (200 aa)) form a mediates interaction with RNF4 region. Glycyl lysine isopeptide (Lys-Gly) (interchain with G-Cter in SUMO2) cross-links involve residues Lys-1003, Lys-1012, Lys-1030, and Lys-1040. Residues 1039 to 1080 (IKSPQESTGDPGNSSSVSEGKGSSERGSPIEKYMRPAKHPNY) are disordered. Residues 1040–1049 (KSPQESTGDP) are compositionally biased toward polar residues. The residue at position 1041 (Ser-1041) is a Phosphoserine. Over residues 1050 to 1059 (GNSSSVSEGK) the composition is skewed to low complexity. Over residues 1060–1072 (GSSERGSPIEKYM) the composition is skewed to basic and acidic residues. A Phosphoserine modification is found at Ser-1066. Residue Lys-1070 forms a Glycyl lysine isopeptide (Lys-Gly) (interchain with G-Cter in SUMO2) linkage. The residue at position 1085 (Ser-1085) is a Phosphoserine. A transcriptional repressor domain region spans residues 1163–1281 (PLDLAIKHSR…QVEKNGKPKE (119 aa)). The tract at residues 1168-1196 (IKHSRPGPTANGASKEKTKAPPNVKNEGP) is disordered. Glycyl lysine isopeptide (Lys-Gly) (interchain with G-Cter in SUMO2); alternate cross-links involve residues Lys-1192 and Lys-1201. Residues Lys-1192 and Lys-1201 each participate in a glycyl lysine isopeptide (Lys-Gly) (interchain with G-Cter in SUMO); alternate cross-link. Residue Lys-1201 forms a Glycyl lysine isopeptide (Lys-Gly) (interchain with G-Cter in SUMO1); alternate linkage. C2H2-type zinc fingers lie at residues 1215 to 1237 (TKCVHCGIVFLDEVMYALHMSCH) and 1243 to 1267 (FQCSICQHLCTDKYDFTTHIQRGLH).

As to quaternary structure, interacts with RNF4; regulates TRPS1 repressor activity. Interacts specifically with the activator form of GLI3 (GLI3A) but not with the repressor form (GLI3R). Sumoylated. Sumoylation in the repressor domain inhibits the transcription repression activity. Sumoylation on Lys-1201 is the major site. Appears to be sumoylated on multiple sites. Ubiquitously expressed in the adult. Found in fetal brain, lung, kidney, liver, spleen and thymus. More highly expressed in androgen-dependent than in androgen-independent prostate cancer cells.

The protein resides in the nucleus. Functionally, transcriptional repressor. Binds specifically to GATA sequences and represses expression of GATA-regulated genes at selected sites and stages in vertebrate development. Regulates chondrocyte proliferation and differentiation. Executes multiple functions in proliferating chondrocytes, expanding the region of distal chondrocytes, activating proliferation in columnar cells and supporting the differentiation of columnar into hypertrophic chondrocytes. The protein is Zinc finger transcription factor Trps1 (TRPS1) of Homo sapiens (Human).